We begin with the raw amino-acid sequence, 253 residues long: Ubiquinone/menaquinone biosynthesis C-methyltransferase UbiE (253 aa).

S-adenosyl-L-methionine-binding positions include threonine 76, aspartate 97, 125-126, and serine 142; that span reads NA.

Belongs to the class I-like SAM-binding methyltransferase superfamily. MenG/UbiE family.

The enzyme catalyses a 2-demethylmenaquinol + S-adenosyl-L-methionine = a menaquinol + S-adenosyl-L-homocysteine + H(+). It carries out the reaction a 2-methoxy-6-(all-trans-polyprenyl)benzene-1,4-diol + S-adenosyl-L-methionine = a 5-methoxy-2-methyl-3-(all-trans-polyprenyl)benzene-1,4-diol + S-adenosyl-L-homocysteine + H(+). It functions in the pathway quinol/quinone metabolism; menaquinone biosynthesis; menaquinol from 1,4-dihydroxy-2-naphthoate: step 2/2. It participates in cofactor biosynthesis; ubiquinone biosynthesis. Functionally, methyltransferase required for the conversion of demethylmenaquinol (DMKH2) to menaquinol (MKH2) and the conversion of 2-polyprenyl-6-methoxy-1,4-benzoquinol (DDMQH2) to 2-polyprenyl-3-methyl-6-methoxy-1,4-benzoquinol (DMQH2). In Xylella fastidiosa (strain M12), this protein is Ubiquinone/menaquinone biosynthesis C-methyltransferase UbiE.